The chain runs to 105 residues: Protein AlbB (105 aa).

Functionally, involved in the biosynthesis of albonoursin (cyclo[(alpha,beta-dehydro-Phe)-(alpha,beta-dehydro-Leu)]), an antibacterial peptide. AlbB is essential for cyclic dipeptide oxidase AlbA (CDO) activity. This Streptomyces noursei (Streptomyces albulus) protein is Protein AlbB (albB).